An 883-amino-acid polypeptide reads, in one-letter code: Phosphoenolpyruvate carboxylase (883 aa).

Active-site residues include H138 and K546.

The protein belongs to the PEPCase type 1 family. Homotetramer. It depends on Mg(2+) as a cofactor.

It catalyses the reaction oxaloacetate + phosphate = phosphoenolpyruvate + hydrogencarbonate. The enzyme has distinct binding sites for each of the allosteric effectors such as acetyl-CoA, fructose 1,6-bisphosphate, guanosine 3'-diphosphate 5'-diphosphate, long chain fatty acids, and L-aspartate. Its function is as follows. Forms oxaloacetate, a four-carbon dicarboxylic acid source for the tricarboxylic acid cycle. This is Phosphoenolpyruvate carboxylase from Escherichia coli O157:H7.